The sequence spans 279 residues: RRP15-like protein (279 aa).

3 disordered regions span residues 1 to 40, 56 to 120, and 200 to 279; these read MALL…GANA, GPTV…TERR, and KSTA…DEED. Over residues 73 to 83 the composition is skewed to basic and acidic residues; that stretch reads KTSEAAKKPGF. Acidic residues-rich tracts occupy residues 93-104 and 213-224; these read KEEDDDDEEDGD and QETDDDDEDDTA. A compositionally biased stretch (basic and acidic residues) spans 232 to 245; it reads KKSEWNVLREDFMT. Acidic residues predominate over residues 267–279; the sequence is DEADDSDDDDEED.

This sequence belongs to the RRP15 family.

The protein is RRP15-like protein of Drosophila pseudoobscura pseudoobscura (Fruit fly).